The sequence spans 745 residues: Cytoskeleton-associated protein 2-like (745 aa).

The disordered stretch occupies residues 25-141; it reads AKGKLKSQNT…GELSRKPVGS (117 aa). Residues 30–61 are compositionally biased toward polar residues; sequence KSQNTKPYLKSKNNCQNQPPSKSTIRPKNDVT. Residues 109 to 120 show a composition bias toward low complexity; that stretch reads SSNPYSKPSSKS. Residues 121-133 are compositionally biased toward polar residues; it reads FQQCEAGSSTTGE. Residues 185-187 carry the KEN box motif; that stretch reads KEN. Residues 192 to 203 show a composition bias toward basic and acidic residues; that stretch reads LTEPERKPDPKL. Disordered stretches follow at residues 192–217, 256–276, and 385–411; these read LTEP…YNQT, VKSQ…KPSR, and RFNS…NNGF. Lysine 198 is covalently cross-linked (Glycyl lysine isopeptide (Lys-Gly) (interchain with G-Cter in SUMO1); alternate). Lysine 198 is covalently cross-linked (Glycyl lysine isopeptide (Lys-Gly) (interchain with G-Cter in SUMO2); alternate). The residue at position 204 (tyrosine 204) is a Phosphotyrosine. The segment covering 389 to 411 has biased composition (polar residues); it reads AIPSTPSIRPNGTSGNKHNNNGF. A Phosphothreonine modification is found at threonine 742. A Phosphoserine modification is found at serine 745.

The protein belongs to the CKAP2 family. Post-translationally, ubiquitinated by the anaphase promoting complex/cyclosome (APC/C).

The protein resides in the cytoplasm. It is found in the cytoskeleton. The protein localises to the spindle pole. Its function is as follows. Microtubule-associated protein required for mitotic spindle formation and cell-cycle progression in neural progenitor cells. This Homo sapiens (Human) protein is Cytoskeleton-associated protein 2-like (CKAP2L).